Consider the following 638-residue polypeptide: Growth hormone receptor (638 aa).

An N-terminal signal peptide occupies residues 1–18 (MDLWQLLLTLALAGSSDA). Topologically, residues 19–264 (FSGSEPTAAI…NQFTCEEDFY (246 aa)) are extracellular. Asparagine 46 carries an N-linked (GlcNAc...) asparagine glycan. 2 cysteine pairs are disulfide-bonded: cysteine 56–cysteine 66 and cysteine 101–cysteine 112. Asparagine 115 carries N-linked (GlcNAc...) asparagine glycosylation. Cysteine 126 and cysteine 140 form a disulfide bridge. In terms of domain architecture, Fibronectin type-III spans 151-254 (PPIALNWTLL…EVLYVTLPQM (104 aa)). N-linked (GlcNAc...) asparagine glycosylation is found at asparagine 156, asparagine 161, and asparagine 200. Residues 240–244 (YGEFS) carry the WSXWS motif motif. Residues 265–288 (FPWLLIIIFGIFGLTVMLFVFLFS) traverse the membrane as a helical segment. Topologically, residues 289–638 (KQQRIKMLIL…STDQLNKIMP (350 aa)) are cytoplasmic. Residues 294 to 379 (KMLILPPVPV…HQKSHSNLGV (86 aa)) form a required for JAK2 binding region. The Box 1 motif motif lies at 297–305 (ILPPVPVPK). A UbE motif motif is present at residues 340–349 (DSWVEFIELD). Serine 341 carries the phosphoserine modification. The segment at 353–388 (PDEKNEGSDTDRLLSSDHQKSHSNLGVKDGDSGRTS) is disordered. The segment covering 356–372 (KNEGSDTDRLLSSDHQK) has biased composition (basic and acidic residues). A phosphotyrosine mark is found at tyrosine 487 and tyrosine 595.

The protein belongs to the type I cytokine receptor family. Type 1 subfamily. As to quaternary structure, on growth hormone (GH) binding, forms homodimers and binds JAK2 via a box 1-containing domain. In terms of processing, the soluble form (GHBP) is produced by phorbol ester-promoted proteolytic cleavage at the cell surface (shedding) by ADAM17/TACE. Shedding is inhibited by growth hormone (GH) binding to the receptor probably due to a conformational change in GHR rendering the receptor inaccessible to ADAM17. Post-translationally, on GH binding, phosphorylated on tyrosine residues in the cytoplasmic domain by JAK2. Ubiquitinated by the ECS(SOCS2) complex following ligand-binding and phosphorylation by JAK2, leading to its degradation by the proteasome. Regulation by the ECS(SOCS2) complex acts as a negative feedback loop of growth hormone receptor signaling. Ubiquitination is not sufficient for GHR internalization.

The protein resides in the cell membrane. It is found in the secreted. Its function is as follows. Receptor for pituitary gland growth hormone (GH1) involved in regulating postnatal body growth. On ligand binding, couples to the JAK2/STAT5 pathway. Functionally, the soluble form (GHBP) acts as a reservoir of growth hormone in plasma and may be a modulator/inhibitor of GH signaling. The sequence is that of Growth hormone receptor (GHR) from Macaca mulatta (Rhesus macaque).